We begin with the raw amino-acid sequence, 221 residues long: Molybdenum cofactor guanylyltransferase (221 aa).

GTP contacts are provided by residues 18–20 (IAG), K35, N63, D81, and D112. D112 provides a ligand contact to Mg(2+).

The protein belongs to the MobA family. In terms of assembly, monomer. It depends on Mg(2+) as a cofactor.

It localises to the cytoplasm. The enzyme catalyses Mo-molybdopterin + GTP + H(+) = Mo-molybdopterin guanine dinucleotide + diphosphate. Functionally, transfers a GMP moiety from GTP to Mo-molybdopterin (Mo-MPT) cofactor (Moco or molybdenum cofactor) to form Mo-molybdopterin guanine dinucleotide (Mo-MGD) cofactor. This chain is Molybdenum cofactor guanylyltransferase, found in Brucella abortus (strain S19).